Reading from the N-terminus, the 319-residue chain is Oxaloacetate tautomerase fahd2, mitochondrial (319 aa).

The N-terminal 31 residues, 1 to 31 (MLTQTRVALRVLKNAHLTLPKRNISQSPALS), are a transit peptide targeting the mitochondrion. The Mg(2+) site is built by Glu-164, Glu-166, and Asp-195.

It belongs to the FAH family. Requires Mg(2+) as cofactor. Mn(2+) is required as a cofactor.

It is found in the mitochondrion. It carries out the reaction oxaloacetate = enol-oxaloacetate. Tautomerase that converts enol-oxaloacetate, a strong inhibitor of succinate dehydrogenase, to the physiological keto form of oxaloacetate. It is thereby required to maximize aerobic respiration efficiency by preventing succinate dehydrogenase inhibition. The protein is Oxaloacetate tautomerase fahd2, mitochondrial (fahd2) of Xenopus laevis (African clawed frog).